The following is a 794-amino-acid chain: MAGWIQAQQLQGDALRQMQVLYGQHFPIEVRHYLAQWIESQPWDAIDLDNPQDRAQATQLLEGLVQELQKKAEHQVGEDGFLLKIKLGHYATQLQNTYDRCPMELVRCIRHILYNEQRLVREANNGSSSAGILVDAMSQKHLQINQTFEELRLVTQDTENELKKLQQTQEYFIIQYQESLRIQAQFAQLAQLNPQERLSRETALQQKQVSLEAWLQREAQTLQQYRVELAEKHQKTLQLLRKQQTIILDDELIQWKRRQQLAGNGGPPEGSLDVLQSWCEKLAEIIWQNRQQIRRAEHLCQQLPIPGPVEEMLAEVNATITDIISALVTSTFIIEKQPPQVLKTQTKFAATVRLLVGGKLNVHMNPPQVKATIISEQQAKSLLKNENTRNECSGEILNNCCVMEYHQATGTLSAHFRNMSLKRIKRADRRGAESVTEEKFTVLFESQFSVGSNELVFQVKTLSLPVVVIVHGSQDHNATATVLWDNAFAEPGRVPFAVPDKVLWPQLCEALNMKFKAEVQSNRGLTKENLVFLAQKLFNSSSSHLEDYNGMSVSWSQFNRENLPGWNYTFWQWFDGVMEVLKKHHKPHWNDGAILGFVNKQQAHDLLINKPDGTFLLRFSDSEIGGITIAWKFDSPDRNLWNLKPFTTRDFSIRSLADRLGDLNYLIYVFPDRPKDEVFSKYYTPVLAKAVDGYVKPQIKQVVPEFVSASADSAGSNATYMDQAPSPAVCPQPHYNMYPQNPDPVLDQDGEFDLDETMDVARHVEELLRRPMDSLEPSLPPPTGLFTPGRGSLS.

Residue tyrosine 90 is modified to Phosphotyrosine. A Phosphoserine modification is found at serine 128. Residues 589 to 686 (WNDGAILGFV…EVFSKYYTPV (98 aa)) form the SH2 domain. Tyrosine 682 is subject to Phosphotyrosine. At tyrosine 694 the chain carries Phosphotyrosine; by JAK2. A disordered region spans residues 771 to 794 (PMDSLEPSLPPPTGLFTPGRGSLS).

Belongs to the transcription factor STAT family. In terms of assembly, forms a homodimer or a heterodimer with a related family member. Binds NR3C1. Interacts with NCOA1 and SOCS7. Interacts with ERBB4. Interacts with EBF4. Interacts with CD69. In terms of processing, ISGylated. Tyrosine phosphorylated in response to KITLG/SCF, IL2, IL3, IL7, IL15, CSF2/GMCSF, GH1, PRL, EPO and THPO. Activated KIT promotes phosphorylation on tyrosine residues and subsequent translocation to the nucleus. Tyrosine phosphorylated in response to constitutively activated FGFR1, FGFR2, FGFR3 and FGFR4. Tyrosine phosphorylation is required for DNA-binding activity and dimerization. Serine phosphorylation is also required for maximal transcriptional activity. Tyrosine phosphorylated in response to signaling via activated FLT3; wild-type FLT3 results in much weaker phosphorylation than constitutively activated mutant FLT3. Alternatively, can be phosphorylated by JAK2 at Tyr-694.

It is found in the cytoplasm. Its subcellular location is the nucleus. Carries out a dual function: signal transduction and activation of transcription. Mediates cellular responses to the cytokine KITLG/SCF and other growth factors. May mediate cellular responses to activated FGFR1, FGFR2, FGFR3 and FGFR4. Binds to the GAS element and activates PRL-induced transcription. Regulates the expression of milk proteins during lactation. In Bos taurus (Bovine), this protein is Signal transducer and activator of transcription 5A (STAT5A).